Consider the following 203-residue polypeptide: Protein GrpE 2 (203 aa).

Residues 1-12 (MPTRPQEPDRAA) show a composition bias toward basic and acidic residues. The disordered stretch occupies residues 1 to 64 (MPTRPQEPDR…APAEDEYTTA (64 aa)). Positions 45 to 56 (GEPGPDAAGPAP) are enriched in low complexity.

It belongs to the GrpE family. Homodimer.

The protein localises to the cytoplasm. Participates actively in the response to hyperosmotic and heat shock by preventing the aggregation of stress-denatured proteins, in association with DnaK and GrpE. It is the nucleotide exchange factor for DnaK and may function as a thermosensor. Unfolded proteins bind initially to DnaJ; upon interaction with the DnaJ-bound protein, DnaK hydrolyzes its bound ATP, resulting in the formation of a stable complex. GrpE releases ADP from DnaK; ATP binding to DnaK triggers the release of the substrate protein, thus completing the reaction cycle. Several rounds of ATP-dependent interactions between DnaJ, DnaK and GrpE are required for fully efficient folding. This is Protein GrpE 2 from Streptomyces avermitilis (strain ATCC 31267 / DSM 46492 / JCM 5070 / NBRC 14893 / NCIMB 12804 / NRRL 8165 / MA-4680).